Here is a 276-residue protein sequence, read N- to C-terminus: 3' cyclic ADP-D-ribose synthase HopAM1 (276 aa).

A compositionally biased stretch (polar residues) spans 20–38; sequence VEASQVKSAGTSSTTNIDS. The disordered stretch occupies residues 20-39; it reads VEASQVKSAGTSSTTNIDSK. The interval 165 to 214 is TIR domain; it reads KNGIAHAKKMAFFITPEWLGSDFCKQEFQWLSETKNKDIKSAFVIFKDVD. The active site involves glutamine 190.

In terms of assembly, homodimer.

It is found in the host cytoplasm. The protein localises to the host cytosol. The catalysed reaction is NAD(+) = 3'cADPR + nicotinamide + H(+). Its function is as follows. NAD(+) hydrolase (NADase) that cleaves NAD(+) into nicotinamide and 3' cyclic ADP-D-ribose (3'cADPR, v2-cADPR). Upon infiltration of A.thaliana with this bacteria an effector-triggered immunity-like phenotype (ETI-like, cell death with severe chlorosis) is seen, 3'cADPR levels rise while NAD(+) levels remain constant. Plant immune responses are suppressed. Triggers hypersensitive response-like cell death in Nicotiana tabacum cv. Xanthi and N.benthamiana when transiently expressed, depletes NAD(+) in N.benthamiana. Causes cell death upon induction in yeast due to NAD(+) depletion and/or 3'cADPR itself. Transgenic A.thaliana expressing HopAM1 suppresses its plant immune system upon challenge; the plants produce 3'cADPR without significantly depleting NAD(+). The chain is 3' cyclic ADP-D-ribose synthase HopAM1 from Pseudomonas syringae pv. tomato (strain ATCC BAA-871 / DC3000).